Consider the following 157-residue polypeptide: EKWELDLDIKEVLMHPNYSRSTSDNDIALLRLAQPAILSQTIVPICLPDSGLAERELTQAGQETVVTGWGHRSEAKRNRTFVLNFIKVPVVPQNECINAMHNMISENMLCAGILGDSQDACEGDSGGPMVASFRGTSFLVGLVTWGEGCGRLHNYGV.

The Peptidase S1 domain occupies E1–V157. The N-linked (GlcNAc...) asparagine glycan is linked to N17. D26 acts as the Charge relay system in catalysis. N78 carries N-linked (GlcNAc...) asparagine glycosylation. Intrachain disulfides connect C96–C110 and C121–C149. S125 acts as the Charge relay system in catalysis.

Belongs to the peptidase S1 family. In terms of tissue distribution, plasma; synthesized in the liver.

The protein resides in the secreted. It is found in the golgi apparatus. Its subcellular location is the endoplasmic reticulum. The enzyme catalyses Degradation of blood coagulation factors Va and VIIIa.. In terms of biological role, protein C is a vitamin K-dependent serine protease that regulates blood coagulation by inactivating factors Va and VIIIa in the presence of calcium ions and phospholipids. Exerts a protective effect on the endothelial cell barrier function. The protein is Vitamin K-dependent protein C (PROC) of Felis catus (Cat).